Here is a 733-residue protein sequence, read N- to C-terminus: MELGRSSSTPQEEAISPLGVLGTGPSSSPLGKLQALPIGPGAHRGAHSSSAPAGDSSTREPSGAMKIPNRDSGIDSPSSSVASENFPCEESSEGSPSPAILGLPSETASDSRVPQDNPQEEEDSGVGEEPDPKVTLFRPQEDVSLTQCSDPQKLLHIAQELLHTEEAYVKRLHLLDQVFCTKLTEAGIPLEVTTGIFSNISSIYRFHGQFLLPELQKRITEEWDTNPRLGDILQKLAPFLKMYGEYVKNFDRAMGLVSTWTQRSPQFKDVIHTIQKQEVCGNLTLQHHMLEPVQRVPRYELLLKDYLKRLPRDAPDRKDAERSLELISTAADHSNAAIRKMEKMHKLLEVYEQLGGEEDIVNPANELIKEGSIQKLSAKNGTTQDRHLFLFNNVMLYCVPKLRLMGQKLSVREKMDISDLQVQDIVKPNAACTFIITGRKRSLELQTRTEEEKKEWIQVIQATVEKHKQKSETFRAFGGACSQDEEPTLSPDQPVMSTSSVEPAGVADSNGGTPGIESRKSSSKTRRDKEKPGCKSCGETFNSITKRRYRCKLCGEVICRKCSEFKAENSKQSRVCRECFLEEPLVPPSPSSETPTELKQNAEKPPSVDPRPSLLCGTLNLSDDGTTWNEVWAAIPESDPQVLDLLAGSQAGRLLYSIPLSGCNITMPDPEEGLEAGCAWKLHQGSQTWWLSAPSTKLQQCWLKALGTAVHGDTAGDRPGASQPQAPAGTDTP.

Polar residues-rich tracts occupy residues 1–11, 47–60, and 106–117; these read MELGRSSSTPQ, HSSS…STRE, and ETASDSRVPQDN. Residues 1–134 form a disordered region; it reads MELGRSSSTP…GVGEEPDPKV (134 aa). The segment covering 118-129 has biased composition (acidic residues); it reads PQEEEDSGVGEE. The residue at position 124 (serine 124) is a Phosphoserine. Residues 153-337 enclose the DH domain; that stretch reads KLLHIAQELL…STAADHSNAA (185 aa). The region spanning 366–465 is the PH 1 domain; the sequence is ELIKEGSIQK…WIQVIQATVE (100 aa). Residues 481-535 form a disordered region; the sequence is CSQDEEPTLSPDQPVMSTSSVEPAGVADSNGGTPGIESRKSSSKTRRDKEKPGCK. A compositionally biased stretch (basic and acidic residues) spans 517–533; that stretch reads ESRKSSSKTRRDKEKPG. Residues 528–584 form an FYVE-type zinc finger; the sequence is DKEKPGCKSCGETFNSITKRRYRCKLCGEVICRKCSEFKAENSKQSRVCRECFLEEP. Zn(2+) contacts are provided by cysteine 534, cysteine 537, cysteine 551, cysteine 554, cysteine 559, cysteine 562, cysteine 576, and cysteine 579. Disordered regions lie at residues 586–612 and 712–733; these read VPPS…DPRP and GDTA…TDTP. A PH 2 domain is found at 612–711; sequence PSLLCGTLNL…WLKALGTAVH (100 aa). Threonine 732 bears the Phosphothreonine mark.

As to expression, detected in adult brain, spleen, lung and skeletal muscle. Detected in embryos from 7 dpc to 17 dpc.

It is found in the cytoplasm. It localises to the cytoskeleton. Functionally, promotes the formation of filopodia. May activate CDC42, a member of the Ras-like family of Rho- and Rac proteins, by exchanging bound GDP for free GTP. Plays a role in regulating the actin cytoskeleton and cell shape. In Mus musculus (Mouse), this protein is FYVE, RhoGEF and PH domain-containing protein 3 (Fgd3).